A 331-amino-acid chain; its full sequence is Probable endo-beta-1,4-glucanase B (331 aa).

Residues 1–18 (MKFQSTLLLAAAAGSALA) form the signal peptide. Asparagine 38 and asparagine 100 each carry an N-linked (GlcNAc...) asparagine glycan. Glutamate 160 (proton donor) is an active-site residue. An N-linked (GlcNAc...) asparagine glycan is attached at asparagine 211. Residue glutamate 266 is the Nucleophile of the active site. Asparagine 288 is a glycosylation site (N-linked (GlcNAc...) asparagine).

It belongs to the glycosyl hydrolase 5 (cellulase A) family.

It is found in the secreted. The catalysed reaction is Endohydrolysis of (1-&gt;4)-beta-D-glucosidic linkages in cellulose, lichenin and cereal beta-D-glucans.. In terms of biological role, has endoglucanase activity on substrates containing beta-1,4 glycosidic bonds, like in carboxymethylcellulose (CMC), hydroxyethylcellulose (HEC) and beta-glucan. Involved in the degradation of complex natural cellulosic substrates. The sequence is that of Probable endo-beta-1,4-glucanase B (eglB) from Aspergillus niger (strain ATCC MYA-4892 / CBS 513.88 / FGSC A1513).